A 120-amino-acid polypeptide reads, in one-letter code: V-type proton ATPase subunit F (120 aa).

This sequence belongs to the V-ATPase F subunit family. As to quaternary structure, V-ATPase is a heteromultimeric enzyme composed of a peripheral catalytic V1 complex (components A to H) attached to an integral membrane V0 proton pore complex (components: a, c, c', c'' and d).

In terms of biological role, subunit of the peripheral V1 complex of vacuolar ATPase essential for assembly or catalytic function. V-ATPase is responsible for acidifying a variety of intracellular compartments in eukaryotic cells. This Dictyostelium discoideum (Social amoeba) protein is V-type proton ATPase subunit F (vatF).